Consider the following 55-residue polypeptide: Rubredoxin-1 (55 aa).

The Rubredoxin-like domain occupies 1–54 (MKKWQCVVCGLIYDEAKGWPEEGIEAGTRWEDVPEDWLCPDCGVGKLDFEMIEI). Fe cation-binding residues include C6, C9, C39, and C42.

This sequence belongs to the rubredoxin family. The cofactor is Fe(3+).

The protein localises to the cytoplasm. Its pathway is hydrocarbon metabolism; alkane degradation. Involved in the hydrocarbon hydroxylating system, which transfers electrons from NADH to rubredoxin reductase and then through rubredoxin to alkane 1 monooxygenase. This chain is Rubredoxin-1 (rubA1), found in Pseudomonas aeruginosa (strain ATCC 15692 / DSM 22644 / CIP 104116 / JCM 14847 / LMG 12228 / 1C / PRS 101 / PAO1).